A 268-amino-acid polypeptide reads, in one-letter code: Eukaryotic translation initiation factor 3 subunit J (268 aa).

Disordered stretches follow at residues 1-27, 40-63, and 217-249; these read MSWD…DDEF, DAEE…KVDK, and LAKV…KKDQ. Positions 47-58 are enriched in basic residues; the sequence is QKQKPKAAPKAA. The stretch at 191 to 221 forms a coiled coil; sequence IESIRQTVATLNVLIKEKERQERQARLAKVK.

It belongs to the eIF-3 subunit J family. As to quaternary structure, component of the eukaryotic translation initiation factor 3 (eIF-3) complex.

It localises to the cytoplasm. Component of the eukaryotic translation initiation factor 3 (eIF-3) complex, which is involved in protein synthesis of a specialized repertoire of mRNAs and, together with other initiation factors, stimulates binding of mRNA and methionyl-tRNAi to the 40S ribosome. The eIF-3 complex specifically targets and initiates translation of a subset of mRNAs involved in cell proliferation. In Eremothecium gossypii (strain ATCC 10895 / CBS 109.51 / FGSC 9923 / NRRL Y-1056) (Yeast), this protein is Eukaryotic translation initiation factor 3 subunit J.